The primary structure comprises 87 residues: U3-theraphotoxin-Hhn1a 15 (87 aa).

Residues 1–24 (MVNMKASMFLTFAGLVLLLVVCYA) form the signal peptide. Positions 25-52 (SESEEKEFPKEMLSSIFAVDNDFKQEER) are excised as a propeptide. 3 cysteine pairs are disulfide-bonded: Cys54/Cys67, Cys61/Cys72, and Cys66/Cys79.

Belongs to the neurotoxin 10 (Hwtx-1) family. 51 (Hntx-8) subfamily. Hntx-8 sub-subfamily. Expressed by the venom gland.

Its subcellular location is the secreted. Its function is as follows. Ion channel inhibitor. The protein is U3-theraphotoxin-Hhn1a 15 of Cyriopagopus hainanus (Chinese bird spider).